A 291-amino-acid chain; its full sequence is Porphobilinogen deaminase (291 aa).

Cys237 bears the S-(dipyrrolylmethanemethyl)cysteine mark.

The protein belongs to the HMBS family. Monomer. It depends on dipyrromethane as a cofactor.

The enzyme catalyses 4 porphobilinogen + H2O = hydroxymethylbilane + 4 NH4(+). Its pathway is porphyrin-containing compound metabolism; protoporphyrin-IX biosynthesis; coproporphyrinogen-III from 5-aminolevulinate: step 2/4. Its function is as follows. Tetrapolymerization of the monopyrrole PBG into the hydroxymethylbilane pre-uroporphyrinogen in several discrete steps. The sequence is that of Porphobilinogen deaminase from Clostridium perfringens (strain ATCC 13124 / DSM 756 / JCM 1290 / NCIMB 6125 / NCTC 8237 / Type A).